The following is a 263-amino-acid chain: Ribonuclease HII (263 aa).

One can recognise an RNase H type-2 domain in the interval 39–257 (AFFTGIDEAG…VKPAAAPHAA (219 aa)). A divalent metal cation contacts are provided by D45, E46, and D157.

It belongs to the RNase HII family. Mn(2+) serves as cofactor. Requires Mg(2+) as cofactor.

It is found in the cytoplasm. It catalyses the reaction Endonucleolytic cleavage to 5'-phosphomonoester.. Functionally, endonuclease that specifically degrades the RNA of RNA-DNA hybrids. The sequence is that of Ribonuclease HII from Oleidesulfovibrio alaskensis (strain ATCC BAA-1058 / DSM 17464 / G20) (Desulfovibrio alaskensis).